A 100-amino-acid polypeptide reads, in one-letter code: MGALKPWHIAVLVVVLILLFGAKRLPDAARSLGRSLRIIKAETKSLHDDDRDLAEKANAQAGYQPLPPQVQQEPYPQQTPYQAPPQQQPVVDPVQRARDS.

The helical transmembrane segment at 1-21 threads the bilayer; the sequence is MGALKPWHIAVLVVVLILLFG. Residues 44-55 show a composition bias toward basic and acidic residues; sequence KSLHDDDRDLAE. The tract at residues 44–100 is disordered; sequence KSLHDDDRDLAEKANAQAGYQPLPPQVQQEPYPQQTPYQAPPQQQPVVDPVQRARDS. Positions 69–81 are enriched in low complexity; that stretch reads QVQQEPYPQQTPY.

The protein belongs to the TatA/E family. In terms of assembly, the Tat system comprises two distinct complexes: a TatABC complex, containing multiple copies of TatA, TatB and TatC subunits, and a separate TatA complex, containing only TatA subunits. Substrates initially bind to the TatABC complex, which probably triggers association of the separate TatA complex to form the active translocon.

Its subcellular location is the cell membrane. Functionally, part of the twin-arginine translocation (Tat) system that transports large folded proteins containing a characteristic twin-arginine motif in their signal peptide across membranes. TatA could form the protein-conducting channel of the Tat system. In Salinispora arenicola (strain CNS-205), this protein is Sec-independent protein translocase protein TatA.